Consider the following 194-residue polypeptide: Probable thymidylate kinase (194 aa).

8 to 15 is an ATP binding site; it reads GIDGSGKT.

Belongs to the thymidylate kinase family.

It carries out the reaction dTMP + ATP = dTDP + ADP. In Sulfolobus acidocaldarius (strain ATCC 33909 / DSM 639 / JCM 8929 / NBRC 15157 / NCIMB 11770), this protein is Probable thymidylate kinase.